The primary structure comprises 151 residues: MTALEMQLTELLEASVNASGYELVGLEFIRAGEHSTLRVFVDHENGINVEDCAEASRQISAVMDVEDPITVAYHLEVSSPGLERPLFKAAHYQQFVGHEVNLVLKMAMNNRRKWKGDIVAVEGELITLKVDGNDETFALSNISKANLIPKF.

It belongs to the RimP family.

It is found in the cytoplasm. Functionally, required for maturation of 30S ribosomal subunits. The chain is Ribosome maturation factor RimP from Photobacterium profundum (strain SS9).